Here is a 217-residue protein sequence, read N- to C-terminus: Ribosomal large subunit pseudouridine synthase E (217 aa).

Over residues 19–28 (HQVKRFSSQR) the composition is skewed to polar residues. A disordered region spans residues 19-38 (HQVKRFSSQRSTRRKPENQP). The Nucleophile role is filled by Asp79.

Belongs to the pseudouridine synthase RsuA family.

It carries out the reaction uridine(2457) in 23S rRNA = pseudouridine(2457) in 23S rRNA. Responsible for synthesis of pseudouridine from uracil-2457 in 23S ribosomal RNA. In Escherichia coli O157:H7, this protein is Ribosomal large subunit pseudouridine synthase E (rluE).